The primary structure comprises 554 residues: MDIKRTVLWVIFFMSAVMLYDNWQRDHGRPSMFFPSATQTAPAAASGASGTGATTTAGEAPAAAAAGAAPATTAPAAQAQLVKFSTDVYDGEIDTRGGTLAKLTLKKQGDGKQPDLYITLFDHTAGHTYLARTGLLGGDFPNHNDVYTQLNPGATSLTGDQNTLKLSFESPVKGGVKVVKTYTFTRGSYVIGVDTKIDNVGTAPVTPTVYMELVRDNTAVETPMFSHTFLGPAVYTDAKHFQKINFSDLDKNKADYVNSADNGWVAMVQHYFASAWIPQQGVKRDIYAEKIDPSLYRVGVKQPVAAIAPGQSADVQARLFAGPEEERMLEGIAPGLELVKDYGWVTIIAKPLFWLLEKIHGVVGNWGWAIVLLTILIKAVFFPLSAASYKSMARMKEITPRMQALRERFKSDPQKMNAALMELYKTEKVNPFGGCLPVVIQIPVFISLYWVLLASVEMRGAPWILWIHDLSQRDPFFILPVLMAVSMYVQTSLNPTPPDPVQAKMMKFMPIAFSVMFFFFPAGLVLYYVVNNVLSIAQQYYITRKLGGVKKKPA.

The next 5 membrane-spanning stretches (helical) occupy residues 7–24, 362–382, 436–456, 475–495, and 510–530; these read VLWV…DNWQ, VVGN…AVFF, LPVV…LASV, PFFI…SLNP, and PIAF…YYVV.

It belongs to the OXA1/ALB3/YidC family. Type 1 subfamily. Interacts with the Sec translocase complex via SecD. Specifically interacts with transmembrane segments of nascent integral membrane proteins during membrane integration.

The protein localises to the cell inner membrane. Its function is as follows. Required for the insertion and/or proper folding and/or complex formation of integral membrane proteins into the membrane. Involved in integration of membrane proteins that insert both dependently and independently of the Sec translocase complex, as well as at least some lipoproteins. Aids folding of multispanning membrane proteins. The sequence is that of Membrane protein insertase YidC from Burkholderia vietnamiensis (strain G4 / LMG 22486) (Burkholderia cepacia (strain R1808)).